The following is a 225-amino-acid chain: NAD(P)H-quinone oxidoreductase subunit K, chloroplastic (225 aa).

4 residues coordinate [4Fe-4S] cluster: Cys43, Cys44, Cys108, and Cys139.

Belongs to the complex I 20 kDa subunit family. NDH is composed of at least 16 different subunits, 5 of which are encoded in the nucleus. [4Fe-4S] cluster serves as cofactor.

Its subcellular location is the plastid. The protein localises to the chloroplast thylakoid membrane. The catalysed reaction is a plastoquinone + NADH + (n+1) H(+)(in) = a plastoquinol + NAD(+) + n H(+)(out). It carries out the reaction a plastoquinone + NADPH + (n+1) H(+)(in) = a plastoquinol + NADP(+) + n H(+)(out). NDH shuttles electrons from NAD(P)H:plastoquinone, via FMN and iron-sulfur (Fe-S) centers, to quinones in the photosynthetic chain and possibly in a chloroplast respiratory chain. The immediate electron acceptor for the enzyme in this species is believed to be plastoquinone. Couples the redox reaction to proton translocation, and thus conserves the redox energy in a proton gradient. In Lactuca sativa (Garden lettuce), this protein is NAD(P)H-quinone oxidoreductase subunit K, chloroplastic.